The chain runs to 405 residues: Aspartic protease (405 aa).

The first 21 residues, 1-21 (MISDTVIAILAVALVGSTVQA), serve as a signal peptide directing secretion. Residues 22–81 (APVDATATSTSGIIAVPISKSAAQLAREADPVVSLDWLKKTKAQAQYKHKQANARLHSKR) constitute a propeptide, removed in mature form. The Peptidase A1 domain maps to 97–402 (WTGPITIGGQ…DVGNARVGFA (306 aa)). Asp-113 is an active-site residue. Cys-126 and Cys-131 are joined by a disulfide. Asp-290 is an active-site residue. A disulfide bond links Cys-332 and Cys-366.

This sequence belongs to the peptidase A1 family.

The protein resides in the secreted. With respect to regulation, inhibited by pepstatin A. In terms of biological role, possesses acidic protease activity. Hydrolyzes casein and azoalbumin in vitro. This Phaffia rhodozyma (Yeast) protein is Aspartic protease.